The chain runs to 140 residues: Bacilliredoxin STH2395 (140 aa).

The protein belongs to the bacilliredoxin family.

In Symbiobacterium thermophilum (strain DSM 24528 / JCM 14929 / IAM 14863 / T), this protein is Bacilliredoxin STH2395.